Consider the following 181-residue polypeptide: Ribosome-recycling factor (181 aa).

Residues 135 to 160 (MDDIKKDKDMPEDDARKAEDQTQKLT) form a disordered region.

This sequence belongs to the RRF family.

Its subcellular location is the cytoplasm. In terms of biological role, responsible for the release of ribosomes from messenger RNA at the termination of protein biosynthesis. May increase the efficiency of translation by recycling ribosomes from one round of translation to another. This Leuconostoc mesenteroides subsp. mesenteroides (strain ATCC 8293 / DSM 20343 / BCRC 11652 / CCM 1803 / JCM 6124 / NCDO 523 / NBRC 100496 / NCIMB 8023 / NCTC 12954 / NRRL B-1118 / 37Y) protein is Ribosome-recycling factor.